A 358-amino-acid chain; its full sequence is Probable G-protein coupled receptor 25 (358 aa).

The Extracellular segment spans residues 1–43; the sequence is MQSTEPWSPSWGTLSWDYSGSGSLDQVELCPAWNLPYGHAIIP. Residues 44–64 traverse the membrane as a helical segment; the sequence is ALYLAAFAVGLPGNAFVVWLL. Over 65-76 the chain is Cytoplasmic; the sequence is SRQRGPRRLVDT. A helical transmembrane segment spans residues 77-97; it reads FVLHLAAADLGFVLTLPLWAA. The Extracellular portion of the chain corresponds to 98-113; it reads AEARGGLWPFGDGLCK. An intrachain disulfide couples Cys-112 to Cys-191. The helical transmembrane segment at 114–134 threads the bilayer; sequence VSSFALAVTRCAGALLLAGMS. Residues 135 to 155 are Cytoplasmic-facing; the sequence is VDRYLAVGRPLSARPLRSARC. The chain crosses the membrane as a helical span at residues 156 to 176; that stretch reads VRAVCGAAWAAAFLAGLPALL. Residues 177–200 lie on the Extracellular side of the membrane; that stretch reads YRGLQPSLDGVGSQCAEEPWEALQ. A helical transmembrane segment spans residues 201–221; sequence GVGLLLLLLTFALPLAVTLIC. Topologically, residues 222–239 are cytoplasmic; sequence YWRVSRRLPRVGRARSNS. The helical transmembrane segment at 240–260 threads the bilayer; the sequence is LRIIFTVESVFVGCWLPFGVL. The Extracellular portion of the chain corresponds to 261–284; that stretch reads RSLFHLARLQALPLPCSLLLALRW. The chain crosses the membrane as a helical span at residues 285–307; that stretch reads GLTVTTCLAFVNSSANPVIYLLL. The Cytoplasmic segment spans residues 308 to 358; the sequence is DRSFRARARFGLCARAGRQVRRISSASSLSRDDSSVFRGRSPKVNSASATW. Residues 339–358 are disordered; the sequence is DDSSVFRGRSPKVNSASATW.

Belongs to the G-protein coupled receptor 1 family.

The protein localises to the membrane. Functionally, orphan receptor. This chain is Probable G-protein coupled receptor 25 (Gpr25), found in Mus musculus (Mouse).